The chain runs to 437 residues: GTPase Obg (437 aa).

The Obg domain maps to 2 to 160 (SMFLDTAKIS…RQLELELKIL (159 aa)). An OBG-type G domain is found at 161–338 (ADVGLVGFPS…LLEATAELLA (178 aa)). GTP contacts are provided by residues 167-174 (GFPSVGKS), 192-196 (FTTIV), 214-217 (DLPG), 284-287 (NKMD), and 319-321 (SSL). Mg(2+) is bound by residues Ser174 and Thr194. The OCT domain maps to 359–437 (GFAEAEKEFE…IGKFEFEFVD (79 aa)).

Belongs to the TRAFAC class OBG-HflX-like GTPase superfamily. OBG GTPase family. As to quaternary structure, monomer. Mg(2+) serves as cofactor.

The protein localises to the cytoplasm. Functionally, an essential GTPase which binds GTP, GDP and possibly (p)ppGpp with moderate affinity, with high nucleotide exchange rates and a fairly low GTP hydrolysis rate. Plays a role in control of the cell cycle, stress response, ribosome biogenesis and in those bacteria that undergo differentiation, in morphogenesis control. In Streptococcus pyogenes serotype M3 (strain ATCC BAA-595 / MGAS315), this protein is GTPase Obg.